Reading from the N-terminus, the 309-residue chain is Foldase protein PrsA 2 (309 aa).

The signal sequence occupies residues 1-20 (MKYRLIGVGASLVVAVMLTG). A lipid anchor (N-palmitoyl cysteine) is attached at Cys21. The S-diacylglycerol cysteine moiety is linked to residue Cys21. One can recognise a PpiC domain in the interval 137–232 (MPMTTVQHIA…TADTKDKPTY (96 aa)).

Belongs to the PrsA family.

Its subcellular location is the cell membrane. It catalyses the reaction [protein]-peptidylproline (omega=180) = [protein]-peptidylproline (omega=0). Plays a major role in protein secretion by helping the post-translocational extracellular folding of several secreted proteins. This chain is Foldase protein PrsA 2 (prsA2), found in Lactiplantibacillus plantarum (strain ATCC BAA-793 / NCIMB 8826 / WCFS1) (Lactobacillus plantarum).